Here is a 256-residue protein sequence, read N- to C-terminus: Sugar fermentation stimulation protein homolog (256 aa).

The segment covering 128 to 141 has biased composition (low complexity); the sequence is TGSTDTSFSGTPPT. A disordered region spans residues 128–149; the sequence is TGSTDTSFSGTPPTNTEPANTK.

It belongs to the SfsA family.

In Shewanella sediminis (strain HAW-EB3), this protein is Sugar fermentation stimulation protein homolog.